The chain runs to 145 residues: Ventricular natriuretic peptide (145 aa).

The first 24 residues, 1-24 (MRMGKIAVGYGFLLLLVFQLGVRA), serve as a signal peptide directing secretion. Cysteine 117 and cysteine 133 are joined by a disulfide.

This sequence belongs to the natriuretic peptide family. In terms of tissue distribution, heart atrium and ventricle, and to a very low extent in brain.

It localises to the secreted. Its function is as follows. Exhibits natriuretic and vasodepressor activity. The sequence is that of Ventricular natriuretic peptide (vnp) from Acipenser transmontanus (White sturgeon).